Consider the following 282-residue polypeptide: Transformer-2 protein homolog alpha (282 aa).

A disordered region spans residues 1-118; that stretch reads MSDVEENNFE…TGSRANPDPN (118 aa). Ser-2 carries the N-acetylserine modification. Phosphoserine is present on residues Ser-2 and Ser-14. Residue Thr-24 is modified to Phosphothreonine. The segment covering 51-84 has biased composition (basic residues); sequence RSRSKSRSRSRRHSHRRYTRSRSHSHSHRRRSRS. Ser-82, Ser-84, and Ser-86 each carry phosphoserine. Thr-88 is modified (phosphothreonine). The segment covering 92–110 has biased composition (basic residues); that stretch reads RRRRSRSHSPMSNRRRHTG. Residues Ser-96 and Ser-98 each carry the phosphoserine modification. Residues 119–197 form the RRM domain; it reads TCLGVFGLSL…RRIRVDYSIT (79 aa). Residue Lys-198 forms a Glycyl lysine isopeptide (Lys-Gly) (interchain with G-Cter in SUMO2) linkage. Positions 198 to 225 are linker; that stretch reads KRAHTPTPGIYMGRPTHSGGGGGGGGGG. 2 disordered regions span residues 201–245 and 260–282; these read HTPT…YDRG and SPSP…PRRY. Residues Thr-202 and Thr-204 each carry the phosphothreonine modification. Residues 215 to 230 are compositionally biased toward gly residues; sequence SGGGGGGGGGGGGGGG. Arg-232 carries the post-translational modification Omega-N-methylarginine. The segment covering 232 to 245 has biased composition (basic and acidic residues); that stretch reads RRRDSYYDRGYDRG. The residue at position 236 (Ser-236) is a Phosphoserine. Positions 268 to 282 are enriched in basic residues; sequence YRSRSRSRSYSPRRY.

This sequence belongs to the splicing factor SR family. Binds to A3 enhancer proteins SRp75, SRp55, SRp40 and SRp30. Interacts with ILDR1 (via C-terminus) and ILDR2. Post-translationally, phosphorylated in the RS domains.

The protein resides in the nucleus. Functionally, sequence-specific RNA-binding protein which participates in the control of pre-mRNA splicing. This Homo sapiens (Human) protein is Transformer-2 protein homolog alpha.